The sequence spans 158 residues: Placenta growth factor (158 aa).

A signal peptide (or 26) is located at residues 1-23 (MLAMKLFTCFLQVLAGLAVHSQG). Asparagine 29 and asparagine 30 each carry an N-linked (GlcNAc...) asparagine glycan. 3 disulfide bridges follow: cysteine 48–cysteine 90, cysteine 79–cysteine 125, and cysteine 83–cysteine 127. Asparagine 97 carries an N-linked (GlcNAc...) asparagine glycan. Residues 136–158 (AERRKTKGKRKQSKTPQTEEPHL) are disordered. A compositionally biased stretch (basic residues) spans 137–148 (ERRKTKGKRKQS).

It belongs to the PDGF/VEGF growth factor family. In terms of assembly, antiparallel homodimer; disulfide-linked. Also found as heterodimer with VEGFA/VEGF.

Its subcellular location is the secreted. Functionally, growth factor active in angiogenesis and endothelial cell growth, stimulating their proliferation and migration. It binds to the receptor FLT1/VEGFR-1. Also promotes cell tumor growth. The chain is Placenta growth factor (Pgf) from Rattus norvegicus (Rat).